We begin with the raw amino-acid sequence, 850 residues long: DNA polymerase I (850 aa).

Positions 1-288 constitute a 5'-3' exonuclease domain; that stretch reads MKLVIFDGNS…SIIKRLGLSE (288 aa). Positions 470–850 are polymerase; sequence VDRDALIQYT…KEGLNWYETK (381 aa).

The protein belongs to the DNA polymerase type-A family.

It carries out the reaction DNA(n) + a 2'-deoxyribonucleoside 5'-triphosphate = DNA(n+1) + diphosphate. Its function is as follows. In addition to polymerase activity, this DNA polymerase exhibits 3'-5' and 5'-3' exonuclease activity. The polypeptide is DNA polymerase I (polA) (Caldicellulosiruptor bescii (strain ATCC BAA-1888 / DSM 6725 / KCTC 15123 / Z-1320) (Anaerocellum thermophilum)).